The sequence spans 209 residues: COP9 signalosome complex subunit 8 (209 aa).

The 172-residue stretch at 8-179 (DNAFSFRKLL…GTLDVSLNRF (172 aa)) folds into the PCI domain. Ser-175 bears the Phosphoserine mark.

Belongs to the CSN8 family. As to quaternary structure, component of the CSN complex, composed of COPS1/GPS1, COPS2, COPS3, COPS4, COPS5, COPS6, COPS7 (COPS7A or COPS7B), COPS8 and COPS9. In the complex, it probably interacts directly with COPS3, COPS4 and COPS7 (COPS7A or COPS7B). Widely expressed.

The protein localises to the cytoplasm. It localises to the nucleus. Functionally, component of the COP9 signalosome complex (CSN), a complex involved in various cellular and developmental processes. The CSN complex is an essential regulator of the ubiquitin (Ubl) conjugation pathway by mediating the deneddylation of the cullin subunits of SCF-type E3 ligase complexes, leading to decrease the Ubl ligase activity of SCF-type complexes such as SCF, CSA or DDB2. The complex is also involved in phosphorylation of p53/TP53, c-jun/JUN, IkappaBalpha/NFKBIA, ITPK1 and IRF8/ICSBP, possibly via its association with CK2 and PKD kinases. CSN-dependent phosphorylation of TP53 and JUN promotes and protects degradation by the Ubl system, respectively. This chain is COP9 signalosome complex subunit 8 (Cops8), found in Mus musculus (Mouse).